We begin with the raw amino-acid sequence, 355 residues long: Tryptophan--tRNA ligase (355 aa).

ATP-binding positions include Gln-13 to Thr-15 and Gly-21 to Asn-22. Positions Pro-14–Asn-22 match the 'HIGH' region motif. Asp-137 provides a ligand contact to L-tryptophan. ATP is bound by residues Gly-149–Asp-151, Ile-208, and Lys-217–Ser-221. A 'KMSKS' region motif is present at residues Lys-217 to Ser-221.

Belongs to the class-I aminoacyl-tRNA synthetase family. Homodimer.

It localises to the cytoplasm. It catalyses the reaction tRNA(Trp) + L-tryptophan + ATP = L-tryptophyl-tRNA(Trp) + AMP + diphosphate + H(+). Its function is as follows. Catalyzes the attachment of tryptophan to tRNA(Trp). The protein is Tryptophan--tRNA ligase of Brucella melitensis biotype 1 (strain ATCC 23456 / CCUG 17765 / NCTC 10094 / 16M).